The primary structure comprises 226 residues: Phosphoglycolate phosphatase (226 aa).

Residue Asp-9 is the Nucleophile of the active site. Mg(2+)-binding residues include Asp-9 and Asp-11. Residue Lys-150 participates in substrate binding. The Mg(2+) site is built by Asp-173 and Asp-177.

Belongs to the archaeal SPP-like hydrolase family. Requires Mg(2+) as cofactor.

The catalysed reaction is 2-phosphoglycolate + H2O = glycolate + phosphate. Catalyzes the dephosphorylation of 2-phosphoglycolate. The chain is Phosphoglycolate phosphatase from Methanococcoides burtonii (strain DSM 6242 / NBRC 107633 / OCM 468 / ACE-M).